The chain runs to 211 residues: FMN-dependent NADH:quinone oxidoreductase 2 (211 aa).

FMN-binding positions include Ser10 and 17–19; that span reads SRS.

This sequence belongs to the azoreductase type 1 family. As to quaternary structure, homodimer. FMN is required as a cofactor.

It carries out the reaction 2 a quinone + NADH + H(+) = 2 a 1,4-benzosemiquinone + NAD(+). The catalysed reaction is N,N-dimethyl-1,4-phenylenediamine + anthranilate + 2 NAD(+) = 2-(4-dimethylaminophenyl)diazenylbenzoate + 2 NADH + 2 H(+). Functionally, quinone reductase that provides resistance to thiol-specific stress caused by electrophilic quinones. Also exhibits azoreductase activity. Catalyzes the reductive cleavage of the azo bond in aromatic azo compounds to the corresponding amines. This Listeria innocua serovar 6a (strain ATCC BAA-680 / CLIP 11262) protein is FMN-dependent NADH:quinone oxidoreductase 2.